The following is a 225-amino-acid chain: Chromosome partition protein MukE (225 aa).

The segment at 197 to 225 (RDGEAMPIENHLQLNDETEESQPDSGEEE) is disordered. The segment covering 212 to 225 (DETEESQPDSGEEE) has biased composition (acidic residues).

This sequence belongs to the MukE family. Interacts, and probably forms a ternary complex, with MukF and MukB. The complex formation is stimulated by calcium or magnesium.

It is found in the cytoplasm. The protein resides in the nucleoid. Its function is as follows. Involved in chromosome condensation, segregation and cell cycle progression. May participate in facilitating chromosome segregation by condensation DNA from both sides of a centrally located replisome during cell division. Probably acts via its interaction with MukB and MukF. The sequence is that of Chromosome partition protein MukE from Salmonella typhi.